The primary structure comprises 316 residues: MSKKPPNRPGITFEIGARLEALDYLQKWYPSRIEKIDYEEGKMLVHFERWSHRYDEWIYWDSNRLRPLERPALRKEGLKDEEDFFDFKAGEEVLARWTDCRYYPAKIEAINKEGTFTVQFYDGVIRCLKRMHIKAMPEDAKGQVKAQHPLSWCCPSDPAGSCNQSMGSEDWIALVKAAAAAAAKNKTGNKPRTSANSNKDKEKDERKWFKVPSKKEETSTSITTPEVEKKEDLPTSSETFVGLHVENVPKMVFPQPESTLTNKRKNNQGNSFQAKRARLNKITGLLASKAVGVDGAEKKEDYNETAPMLEQVLHSL.

Residues 11 to 71 (ITFEIGARLE…SNRLRPLERP (61 aa)) enclose the Tudor 1 domain. Residues K75 and K79 each participate in a glycyl lysine isopeptide (Lys-Gly) (interchain with G-Cter in SUMO2) cross-link. The 57-residue stretch at 85–141 (FDFKAGEEVLARWTDCRYYPAKIEAINKEGTFTVQFYDGVIRCLKRMHIKAMPEDAK) folds into the Tudor 2 domain. Positions 183–237 (AKNKTGNKPRTSANSNKDKEKDERKWFKVPSKKEETSTSITTPEVEKKEDLPTSS) are disordered. Residues 186–197 (KTGNKPRTSANS) show a composition bias toward polar residues. The span at 198–218 (NKDKEKDERKWFKVPSKKEET) shows a compositional bias: basic and acidic residues.

Interacts with methylated DNMT1 (DNMT1K142me1). Interacts with SOX2.

Its subcellular location is the nucleus. Its function is as follows. Is a negative regulator of proteasomal degradation of a set of methylated proteins, including DNMT1 and SOX2. Involved in the maintainance of embryonic stem cells pluripotency, through the regulation of SOX2 levels. The sequence is that of PHD finger protein 20-like protein 1 (PHF20L1) from Bos taurus (Bovine).